The primary structure comprises 196 residues: Holliday junction branch migration complex subunit RuvA (196 aa).

Positions 1-63 (MYDYIKGKLS…DDAHLLFGFH (63 aa)) are domain I. The segment at 64–142 (TENEKEIFLN…EASGESATSR (79 aa)) is domain II. The flexible linker stretch occupies residues 143–148 (KVSSEQ). The interval 148–196 (QNSNLEEAMEALLALGYKATELKKVKAFFEGTNETVEQYIKSSLKMLMK) is domain III.

The protein belongs to the RuvA family. As to quaternary structure, homotetramer. Forms an RuvA(8)-RuvB(12)-Holliday junction (HJ) complex. HJ DNA is sandwiched between 2 RuvA tetramers; dsDNA enters through RuvA and exits via RuvB. An RuvB hexamer assembles on each DNA strand where it exits the tetramer. Each RuvB hexamer is contacted by two RuvA subunits (via domain III) on 2 adjacent RuvB subunits; this complex drives branch migration. In the full resolvosome a probable DNA-RuvA(4)-RuvB(12)-RuvC(2) complex forms which resolves the HJ.

Its subcellular location is the cytoplasm. Functionally, the RuvA-RuvB-RuvC complex processes Holliday junction (HJ) DNA during genetic recombination and DNA repair, while the RuvA-RuvB complex plays an important role in the rescue of blocked DNA replication forks via replication fork reversal (RFR). RuvA specifically binds to HJ cruciform DNA, conferring on it an open structure. The RuvB hexamer acts as an ATP-dependent pump, pulling dsDNA into and through the RuvAB complex. HJ branch migration allows RuvC to scan DNA until it finds its consensus sequence, where it cleaves and resolves the cruciform DNA. The sequence is that of Holliday junction branch migration complex subunit RuvA from Streptococcus agalactiae serotype Ia (strain ATCC 27591 / A909 / CDC SS700).